The chain runs to 96 residues: Small ribosomal subunit protein bS18c (96 aa).

This sequence belongs to the bacterial ribosomal protein bS18 family. In terms of assembly, part of the 30S ribosomal subunit.

It is found in the plastid. It localises to the chloroplast. The polypeptide is Small ribosomal subunit protein bS18c (rps18) (Pinus thunbergii (Japanese black pine)).